The following is a 436-amino-acid chain: Carboxypeptidase A5 (436 aa).

An N-terminal signal peptide occupies residues 1-33 (MQGTPGGGTRPGPSPVDRRTLLVFSFILAAALG). The propeptide at 34–126 (QMNFTGDQVL…ERQAMAKSRR (93 aa)) is activation peptide. The region spanning 138 to 431 (SYHTLEEIYS…MALRTIMEHT (294 aa)) is the Peptidase M14 domain. Residues H196 and E199 each coordinate Zn(2+). Substrate-binding positions include 196-199 (HSRE), R254, and 271-272 (NR). C265 and C288 form a disulfide bridge. Zn(2+) is bound at residue H323. Substrate contacts are provided by residues 324–325 (SY) and Y375. The Proton donor/acceptor role is filled by E397.

Belongs to the peptidase M14 family. It depends on Zn(2+) as a cofactor. Expression is very low or not detectable.

The protein localises to the secreted. The polypeptide is Carboxypeptidase A5 (CPA5) (Homo sapiens (Human)).